A 401-amino-acid polypeptide reads, in one-letter code: MKNVYLDNNATTRIDPMVLEAMMPYLRDYYGNPSSIHDFGGPCRAGLECAREQVASLLGAAYTSEIIFTSCATEATSTAIYSAIALAPERREIITTAVEHPATLAVCEHLERQGYMIHRIGVSEEGALDTAHYYDALSENVALVTMMWANNETGVLFPVSEMATAAHERGILFHCDAVQAVGKIPISLRATDIDMLSCSAHKIHGPKGCGCLYLRRNTRFRPLVRGGHQERGRRAGTENIAGIVGMGAACELADVHMPMMASVQEMRDRLETGLLTTIPHTLLMGANQPRTPNTVNIAFEYIEGEAILLLLNHCGIAASSGSACTSGSLEPSHVMRAMNIPYTAAHGSIRFSLSRFTREREIEWAIEQMPDIVARLRTLSPYWQQDKVQIAQGGLFAPTYG.

Pyridoxal 5'-phosphate-binding positions include 72–73 (AT), asparagine 151, glutamine 179, and 199–201 (SAH). At lysine 202 the chain carries N6-(pyridoxal phosphate)lysine. Threonine 237 lines the pyridoxal 5'-phosphate pocket. The active-site Cysteine persulfide intermediate is the cysteine 324. Cysteine 324 is a binding site for [2Fe-2S] cluster.

This sequence belongs to the class-V pyridoxal-phosphate-dependent aminotransferase family. NifS/IscS subfamily. Homodimer. Pyridoxal 5'-phosphate is required as a cofactor.

It catalyses the reaction (sulfur carrier)-H + L-cysteine = (sulfur carrier)-SH + L-alanine. Functionally, catalyzes the removal of elemental sulfur atoms from cysteine to produce alanine. Seems to participate in the biosynthesis of the nitrogenase metalloclusters by providing the inorganic sulfur required for the Fe-S core formation. The chain is Cysteine desulfurase from Enterobacter agglomerans (Erwinia herbicola).